The sequence spans 824 residues: Glycerol-3-phosphate acyltransferase (824 aa).

Residues 302-307 (CHRSHM) carry the HXXXXD motif motif.

The protein belongs to the GPAT/DAPAT family.

Its subcellular location is the cell inner membrane. The enzyme catalyses sn-glycerol 3-phosphate + an acyl-CoA = a 1-acyl-sn-glycero-3-phosphate + CoA. The protein operates within phospholipid metabolism; CDP-diacylglycerol biosynthesis; CDP-diacylglycerol from sn-glycerol 3-phosphate: step 1/3. This is Glycerol-3-phosphate acyltransferase from Actinobacillus pleuropneumoniae serotype 3 (strain JL03).